Consider the following 204-residue polypeptide: Probable molybdenum cofactor guanylyltransferase (204 aa).

Residues 10-12 (LSG), Lys22, Asp75, and Asp104 each bind GTP. Asp104 is a Mg(2+) binding site.

It belongs to the MobA family. It depends on Mg(2+) as a cofactor.

The protein localises to the cytoplasm. The enzyme catalyses Mo-molybdopterin + GTP + H(+) = Mo-molybdopterin guanine dinucleotide + diphosphate. Transfers a GMP moiety from GTP to Mo-molybdopterin (Mo-MPT) cofactor (Moco or molybdenum cofactor) to form Mo-molybdopterin guanine dinucleotide (Mo-MGD) cofactor. This is Probable molybdenum cofactor guanylyltransferase from Methanocaldococcus jannaschii (strain ATCC 43067 / DSM 2661 / JAL-1 / JCM 10045 / NBRC 100440) (Methanococcus jannaschii).